The primary structure comprises 458 residues: Ammonium transporter Rh type B (458 aa).

The Cytoplasmic segment spans residues 1–13 (MAGSPSRAAGRRL). Residues 14 to 34 (QLPLLCLFLQGATAVLFAVFV) form a helical membrane-spanning segment. Residues 35-61 (RYNHKTDAALWHRSNHSNADNEFYFRY) lie on the Extracellular side of the membrane. The N-linked (GlcNAc...) asparagine glycan is linked to N49. A helical membrane pass occupies residues 62–82 (PSFQDVHAMVFVGFGFLMVFL). The Cytoplasmic segment spans residues 83 to 86 (QRYG). A helical membrane pass occupies residues 87–107 (FSSVGFTFLLAAFALQWSTLV). At 108 to 124 (QGFLHSFHGGHIHVGVE) the chain is on the extracellular side. Residues 125–145 (SMINADFCAGAVLISFGAVLG) traverse the membrane as a helical segment. At 146–149 (KTGP) the chain is on the cytoplasmic side. The helical transmembrane segment at 150-170 (AQLLLMALLEVVLFGINEFVL) threads the bilayer. The Extracellular portion of the chain corresponds to 171–178 (LHLLGVRD). Residues 179–201 (AGGSMTIHTFGAYFGLVLSRVLY) form a helical membrane-spanning segment. At 202–219 (RPQLEKSKHRQGSVYHSD) the chain is on the cytoplasmic side. A helical membrane pass occupies residues 220–240 (LFAMIGTIFLWIFWPSFNAAL). Topologically, residues 241–251 (TALGAGQHRTA) are extracellular. Residues 252–272 (LNTYYSLAASTLGTFALSALV) form a helical membrane-spanning segment. The Cytoplasmic portion of the chain corresponds to 273–282 (GEDGRLDMVH). The helical transmembrane segment at 283–303 (IQNAALAGGVVVGTSSEMMLT) threads the bilayer. Residue P304 is a topological domain, extracellular. The helical transmembrane segment at 305–325 (FGALTAGFLAGTVSTLGYKFF) threads the bilayer. Residues 326 to 346 (RPILESKFKVQDTCGVHNLHG) lie on the Cytoplasmic side of the membrane. Residues 347-367 (MPGVLGALLGVLVAGLATHEA) form a helical membrane-spanning segment. Over 368 to 393 (YGDGLESVFPLIAEGQRSATSQAMHQ) the chain is Extracellular. The chain crosses the membrane as a helical span at residues 394 to 414 (LFGLFVTLMFASVGGGLGGLL). At 415 to 458 (LKLPFLDSPPDSQCYEDQVHWQVPGEHEDKAQRPLRVEEADTQA) the chain is on the cytoplasmic side. Residues 416–424 (KLPFLDSPP) form an interaction with ANK3 region. The short motif at 429-432 (YEDQ) is the Basolateral sorting signal element. The segment at 439–458 (GEHEDKAQRPLRVEEADTQA) is disordered.

Belongs to the ammonium transporter (TC 2.A.49) family. Rh subfamily. Interacts (via C-terminus) with ANK2 and ANK3; required for targeting to the basolateral membrane. N-glycosylated.

It is found in the cell membrane. The protein localises to the basolateral cell membrane. It catalyses the reaction NH4(+)(in) = NH4(+)(out). It carries out the reaction methylamine(out) = methylamine(in). The enzyme catalyses CO2(out) = CO2(in). Functionally, ammonium transporter involved in the maintenance of acid-base homeostasis. Transports ammonium and its related derivative methylammonium across the basolateral plasma membrane of epithelial cells likely contributing to renal transepithelial ammonia transport and ammonia metabolism. May transport either NH4(+) or NH3 ammonia species predominantly mediating an electrogenic NH4(+) transport. May act as a CO2 channel providing for renal acid secretion. The sequence is that of Ammonium transporter Rh type B (RHBG) from Pan troglodytes (Chimpanzee).